We begin with the raw amino-acid sequence, 933 residues long: Melanoma-associated antigen E1 (933 aa).

Disordered stretches follow at residues 1 to 113 (MSLV…VSAG), 149 to 236 (GASI…GINL), 256 to 282 (SDIS…VQST), and 360 to 393 (TSGL…EDEN). Residues 8 to 23 (SRRRRGGRANGRKNSG) are compositionally biased toward basic residues. Composition is skewed to polar residues over residues 64 to 97 (GGSS…QLPT), 149 to 166 (GASI…NVQP), 173 to 184 (GTSVPPTFSEES), and 219 to 236 (APST…GINL). MAGE domains are found at residues 467-666 (MEQN…YNEA) and 721-912 (LESK…YREA). Residues 719 to 933 (SRLESKSRKL…RRPLVVRNLR (215 aa)) form an interaction with DTNA region.

As to quaternary structure, interacts with DTNA. Interacts with TRIM28.

Its subcellular location is the cytoplasm. It is found in the perinuclear region. The protein localises to the nucleus. The protein resides in the cell membrane. May enhance ubiquitin ligase activity of RING-type zinc finger-containing E3 ubiquitin-protein ligases. Proposed to act through recruitment and/or stabilization of the Ubl-conjugating enzyme (E2) at the E3:substrate complex. The polypeptide is Melanoma-associated antigen E1 (Magee1) (Rattus norvegicus (Rat)).